The following is a 724-amino-acid chain: Coiled-coil domain-containing protein 175 (724 aa).

Coiled-coil stretches lie at residues Val-131–Leu-164, Ile-203–Thr-256, Val-282–Lys-373, Glu-426–Leu-534, and Gln-565–Glu-627.

The protein is Coiled-coil domain-containing protein 175 (CCDC175) of Bos taurus (Bovine).